Consider the following 635-residue polypeptide: 1-deoxy-D-xylulose-5-phosphate synthase (635 aa).

Thiamine diphosphate is bound by residues His77 and Gly118 to Ala120. Residue Asp149 coordinates Mg(2+). Thiamine diphosphate contacts are provided by residues Gly150–Ser151, Asn178, Phe290, and Glu375. Asn178 provides a ligand contact to Mg(2+).

The protein belongs to the transketolase family. DXPS subfamily. As to quaternary structure, homodimer. Requires Mg(2+) as cofactor. The cofactor is thiamine diphosphate.

It catalyses the reaction D-glyceraldehyde 3-phosphate + pyruvate + H(+) = 1-deoxy-D-xylulose 5-phosphate + CO2. It participates in metabolic intermediate biosynthesis; 1-deoxy-D-xylulose 5-phosphate biosynthesis; 1-deoxy-D-xylulose 5-phosphate from D-glyceraldehyde 3-phosphate and pyruvate: step 1/1. Functionally, catalyzes the acyloin condensation reaction between C atoms 2 and 3 of pyruvate and glyceraldehyde 3-phosphate to yield 1-deoxy-D-xylulose-5-phosphate (DXP). This is 1-deoxy-D-xylulose-5-phosphate synthase from Chlorobium phaeovibrioides (strain DSM 265 / 1930) (Prosthecochloris vibrioformis (strain DSM 265)).